The sequence spans 952 residues: DNA translocase SftA (952 aa).

The tract at residues 15–468 is disordered; it reads SEEDAERETK…KGPSVPFNVM (454 aa). 4 stretches are compositionally biased toward basic and acidic residues: residues 33–49, 93–104, 134–169, and 200–215; these read EVHHPEGQLKRLEDPKI, YRERPRNEEEQH, VKKDVPKKPSETLNEPDKSVKEKVTLLSEEIERERG, and NRKDTEHDEALAKRPA. Positions 237 to 250 are enriched in low complexity; sequence FFPAEQAEEQTPPE. 4 stretches are compositionally biased toward basic and acidic residues: residues 278 to 287, 310 to 329, 343 to 358, and 391 to 413; these read REQQPEKFEE, EDEKAKEPSDSPVYNHHENA, MDIRQEEPLFTDHEYS, and QETKIDVQPDSHTELEKTEHMEQ. Positions 414–423 are enriched in polar residues; it reads GSKSSTATLE. Basic and acidic residues predominate over residues 424 to 452; sequence NRQEIRADKPREASEEPKKRPGVQEKRTE. The 192-residue stretch at 622–813 folds into the FtsK domain; sequence GNPVVIDLKK…FSVSSQVDSR (192 aa). Residue 639 to 646 coordinates ATP; that stretch reads GATGSGKS.

It belongs to the FtsK/SpoIIIE/SftA family. Homohexamer.

It is found in the cytoplasm. In terms of biological role, required for the accurate completion of chromosome partitioning, in part by promoting efficient resolution of chromosome dimers, before the formation of the division septum. Binds to DNA in a non-specific manner. Shows ATPase activity. Not required for cytokinesis. In Bacillus subtilis (strain 168), this protein is DNA translocase SftA (sftA).